Reading from the N-terminus, the 448-residue chain is L-seryl-tRNA(Sec) selenium transferase (448 aa).

Residue K284 is modified to N6-(pyridoxal phosphate)lysine.

Belongs to the SelA family. Pyridoxal 5'-phosphate is required as a cofactor.

It is found in the cytoplasm. It carries out the reaction L-seryl-tRNA(Sec) + selenophosphate + H(+) = L-selenocysteinyl-tRNA(Sec) + phosphate. It functions in the pathway aminoacyl-tRNA biosynthesis; selenocysteinyl-tRNA(Sec) biosynthesis; selenocysteinyl-tRNA(Sec) from L-seryl-tRNA(Sec) (bacterial route): step 1/1. In terms of biological role, converts seryl-tRNA(Sec) to selenocysteinyl-tRNA(Sec) required for selenoprotein biosynthesis. The chain is L-seryl-tRNA(Sec) selenium transferase from Nautilia profundicola (strain ATCC BAA-1463 / DSM 18972 / AmH).